Consider the following 187-residue polypeptide: RNA pyrophosphohydrolase (187 aa).

One can recognise a Nudix hydrolase domain in the interval glycine 6–threonine 149. Residues glycine 38–glycine 59 carry the Nudix box motif.

Belongs to the Nudix hydrolase family. RppH subfamily. The cofactor is a divalent metal cation.

Accelerates the degradation of transcripts by removing pyrophosphate from the 5'-end of triphosphorylated RNA, leading to a more labile monophosphorylated state that can stimulate subsequent ribonuclease cleavage. The polypeptide is RNA pyrophosphohydrolase (Nitrosomonas eutropha (strain DSM 101675 / C91 / Nm57)).